The sequence spans 261 residues: Cytochrome c oxidase subunit 3 (261 aa).

Over 1–15 (MAHQAHAYHMVDPSP) the chain is Mitochondrial matrix. The chain crosses the membrane as a helical span at residues 16–34 (WPLTGAIAALLLTSGTAVW). The Mitochondrial intermembrane portion of the chain corresponds to 35 to 40 (FHFHSL). Residues 41-66 (TLLTLGNILLLLTMYQWWRDIIREGT) form a helical membrane-spanning segment. The Mitochondrial matrix segment spans residues 67 to 72 (FQGHHT). Residues 73–105 (PPVQKGLRYGMILFITSEVFFFLGFFWAFYHAS) form a helical membrane-spanning segment. Residues 106–128 (LAPTPELGGCWPPTGITTLDPFE) are Mitochondrial intermembrane-facing. A helical transmembrane segment spans residues 129-152 (VPLLNTAVLLASGVTVTWAHHSIM). Residues 153 to 155 (EGE) are Mitochondrial matrix-facing. A helical transmembrane segment spans residues 156 to 183 (RKQTIQALTLTILLGFYFTFLQGMEYYE). Over 184–190 (APFTIAD) the chain is Mitochondrial intermembrane. Residues 191 to 223 (GVYGSTFFVATGFHGLHVIIGSTFLAVCLLRQV) form a helical membrane-spanning segment. At 224–232 (QYHFTSEHH) the chain is on the mitochondrial matrix side. A helical transmembrane segment spans residues 233–256 (FGFEAAAWYWHFVDVVWLFLYVSI). The Mitochondrial intermembrane portion of the chain corresponds to 257–261 (YWWGS).

Belongs to the cytochrome c oxidase subunit 3 family. Component of the cytochrome c oxidase (complex IV, CIV), a multisubunit enzyme composed of 14 subunits. The complex is composed of a catalytic core of 3 subunits MT-CO1, MT-CO2 and MT-CO3, encoded in the mitochondrial DNA, and 11 supernumerary subunits COX4I, COX5A, COX5B, COX6A, COX6B, COX6C, COX7A, COX7B, COX7C, COX8 and NDUFA4, which are encoded in the nuclear genome. The complex exists as a monomer or a dimer and forms supercomplexes (SCs) in the inner mitochondrial membrane with NADH-ubiquinone oxidoreductase (complex I, CI) and ubiquinol-cytochrome c oxidoreductase (cytochrome b-c1 complex, complex III, CIII), resulting in different assemblies (supercomplex SCI(1)III(2)IV(1) and megacomplex MCI(2)III(2)IV(2)).

The protein resides in the mitochondrion inner membrane. The catalysed reaction is 4 Fe(II)-[cytochrome c] + O2 + 8 H(+)(in) = 4 Fe(III)-[cytochrome c] + 2 H2O + 4 H(+)(out). In terms of biological role, component of the cytochrome c oxidase, the last enzyme in the mitochondrial electron transport chain which drives oxidative phosphorylation. The respiratory chain contains 3 multisubunit complexes succinate dehydrogenase (complex II, CII), ubiquinol-cytochrome c oxidoreductase (cytochrome b-c1 complex, complex III, CIII) and cytochrome c oxidase (complex IV, CIV), that cooperate to transfer electrons derived from NADH and succinate to molecular oxygen, creating an electrochemical gradient over the inner membrane that drives transmembrane transport and the ATP synthase. Cytochrome c oxidase is the component of the respiratory chain that catalyzes the reduction of oxygen to water. Electrons originating from reduced cytochrome c in the intermembrane space (IMS) are transferred via the dinuclear copper A center (CU(A)) of subunit 2 and heme A of subunit 1 to the active site in subunit 1, a binuclear center (BNC) formed by heme A3 and copper B (CU(B)). The BNC reduces molecular oxygen to 2 water molecules using 4 electrons from cytochrome c in the IMS and 4 protons from the mitochondrial matrix. This is Cytochrome c oxidase subunit 3 (mt-co3) from Oncorhynchus clarkii (Cutthroat trout).